The sequence spans 720 residues: DNA replication licensing factor mcm7-A (720 aa).

The C4-type zinc finger occupies 183 to 210 (CDQCGAETYQPIQSPTFMPLIMCPSREC). The 207-residue stretch at 331–537 (FYEKLAASIA…NDLRLAQHIT (207 aa)) folds into the MCM domain. 8 residues coordinate ATP: Tyr344, Gly383, Ala385, Lys386, Ser387, Asn488, Arg513, and Arg603. An Arginine finger motif is present at residues 512–515 (SRFD).

Belongs to the MCM family. Component of the mcm2-7 complex (RLF-M). The complex forms a toroidal hexameric ring with the proposed subunit order mcm2-mcm6-mcm4-mcm7-mcm3-mcm5. The heterodimer of mmcm3/mcm5 interacts with mcm4, mmcm6, mcm7 and weakly with mcm2. The N-terminus is required for interaction with mmcm3, though this interaction may not be direct, and remains in a complex with mmcm3 throughout the cell cycle. Begins to associate with zmcm6 at the neurula stage. Component of the replisome complex. Component of the CMG helicase complex, composed of the mcm2-7 complex, the GINS complex and cdc45. In terms of processing, ubiquitinated by traip when forks converge following formation of DNA interstrand cross-links. Ubiquitinated via 'Lys-6'- and 'Lys-63'-linked polyubiquitination by traip. Short ubiquitin chains on mcm7 promote recruitment of DNA glycosylase neil3. If the interstrand cross-link cannot be cleaved by neil3, the ubiquitin chains continue to grow on mcm7, promoting the unloading of the CMG helicase complex by the vcp/p97 ATPase.

It localises to the nucleus. The protein localises to the chromosome. The enzyme catalyses ATP + H2O = ADP + phosphate + H(+). In terms of biological role, acts as a component of the mcm2-7 complex (mcm complex) which is the putative replicative helicase essential for 'once per cell cycle' DNA replication initiation and elongation in eukaryotic cells. The active ATPase sites in the mcm2-7 ring are formed through the interaction surfaces of two neighboring subunits such that a critical structure of a conserved arginine finger motif is provided in trans relative to the ATP-binding site of the Walker A box of the adjacent subunit. The six ATPase active sites, however, are likely to contribute differentially to the complex helicase activity. The existence of maternal and zygotic forms of mcm3 and mcm6 suggests that specific forms of mcm2-7 complexes may be used during different stages of development. In Xenopus laevis (African clawed frog), this protein is DNA replication licensing factor mcm7-A (mcm7-a).